Here is a 158-residue protein sequence, read N- to C-terminus: Cyclic pyranopterin monophosphate synthase (158 aa).

Substrate is bound by residues 74–76 and 112–113; these read MCH and ME. Asp127 is an active-site residue.

This sequence belongs to the MoaC family. In terms of assembly, homohexamer; trimer of dimers.

It carries out the reaction (8S)-3',8-cyclo-7,8-dihydroguanosine 5'-triphosphate = cyclic pyranopterin phosphate + diphosphate. Its pathway is cofactor biosynthesis; molybdopterin biosynthesis. In terms of biological role, catalyzes the conversion of (8S)-3',8-cyclo-7,8-dihydroguanosine 5'-triphosphate to cyclic pyranopterin monophosphate (cPMP). The polypeptide is Cyclic pyranopterin monophosphate synthase (Helicobacter pylori (strain Shi470)).